We begin with the raw amino-acid sequence, 295 residues long: MAELPGQIRHIGGRMSQLLEQIYGFSRRSLFRVISMGPIPCHIAFIMDGNRRYAKKCGLLDGSGHKAGFSALMSMLQYCYELGIKYVTIYAFSIDNFRRKPEEVESVMDLMLEKIKSLLEKESIVHQYGIRVYFIGNLALLNDQVRAAAEKVMKATAKNSRVVLLICIAYNSTDEIVQAVKKSCINKSDNIEASNYKHEDSDSDIEGTDMENQEKKIQLVDIEENMQMSVAPNPDILIRSSGETRLSNFLLWQTGNTQLCSPAALWPEIGLRHLLWAILNFQRNHSYLEKRKKQL.

It belongs to the UPP synthase family. The cofactor is Mg(2+).

It functions in the pathway protein modification; protein glycosylation. In terms of biological role, catalyzes cis-prenyl chain elongation to produce the polyprenyl backbone of dolichol, a glycosyl carrier-lipid required for the biosynthesis of several classes of glycoprotein. This Arabidopsis thaliana (Mouse-ear cress) protein is Dehydrodolichyl diphosphate synthase 6.